The primary structure comprises 149 residues: Phosphoribosyl-AMP cyclohydrolase (149 aa).

Residue D92 participates in Mg(2+) binding. Position 93 (C93) interacts with Zn(2+). D94 and D96 together coordinate Mg(2+). Residues C111 and C118 each coordinate Zn(2+).

It belongs to the PRA-CH family. In terms of assembly, homodimer. It depends on Mg(2+) as a cofactor. Requires Zn(2+) as cofactor.

The protein localises to the cytoplasm. The catalysed reaction is 1-(5-phospho-beta-D-ribosyl)-5'-AMP + H2O = 1-(5-phospho-beta-D-ribosyl)-5-[(5-phospho-beta-D-ribosylamino)methylideneamino]imidazole-4-carboxamide. The protein operates within amino-acid biosynthesis; L-histidine biosynthesis; L-histidine from 5-phospho-alpha-D-ribose 1-diphosphate: step 3/9. Its function is as follows. Catalyzes the hydrolysis of the adenine ring of phosphoribosyl-AMP. This chain is Phosphoribosyl-AMP cyclohydrolase, found in Rhizobium rhizogenes (strain K84 / ATCC BAA-868) (Agrobacterium radiobacter).